The chain runs to 465 residues: Dihydrolipoyllysine-residue acetyltransferase component 5 of pyruvate dehydrogenase complex, chloroplastic (465 aa).

Residues 1 to 31 (MSRLLQTPFLPSVSLPTKTRSSVTGFRVKPR) constitute a chloroplast transit peptide. Residues 39-114 (IREIFMPALS…PVGSAIALLA (76 aa)) form the Lipoyl-binding domain. An N6-lipoyllysine modification is found at Lys80. Residues 123-148 (AKAKASGGGGGGDSKAPPASPPTAAV) form a disordered region. The span at 136-148 (SKAPPASPPTAAV) shows a compositional bias: low complexity. The region spanning 184-221 (VASPYAKKLAKELKVELAGLVGSGPMGRIVAKDVEAVA) is the Peripheral subunit-binding (PSBD) domain. His438 is a catalytic residue.

The protein belongs to the 2-oxoacid dehydrogenase family. The cofactor is (R)-lipoate.

The protein localises to the plastid. The protein resides in the chloroplast stroma. The enzyme catalyses N(6)-[(R)-dihydrolipoyl]-L-lysyl-[protein] + acetyl-CoA = N(6)-[(R)-S(8)-acetyldihydrolipoyl]-L-lysyl-[protein] + CoA. Its function is as follows. The pyruvate dehydrogenase complex catalyzes the overall conversion of pyruvate to acetyl-CoA and CO(2). It contains multiple copies of three enzymatic components: pyruvate dehydrogenase (E1), dihydrolipoamide acetyltransferase (E2) and lipoamide dehydrogenase (E3). This Arabidopsis thaliana (Mouse-ear cress) protein is Dihydrolipoyllysine-residue acetyltransferase component 5 of pyruvate dehydrogenase complex, chloroplastic (EMB3003).